Here is a 690-residue protein sequence, read N- to C-terminus: Beta-galactosidase (690 aa).

Asparagine 173 provides a ligand contact to substrate. Catalysis depends on glutamate 174, which acts as the Proton donor. Residue tryptophan 345 coordinates substrate.

Belongs to the glycosyl hydrolase 42 family.

It carries out the reaction Hydrolysis of terminal non-reducing beta-D-galactose residues in beta-D-galactosides.. Activity stimulated by beta-mercaptoethanol. In terms of biological role, highly specific towards beta-D-galactoside substrates. Hydrolyzes 5-bromo-4-chloro-3-indolyl-beta-D-galactopyranoside (X-Gal) and o-nitrophenyl-beta-D-galactopyranoside (ONPG). Has activity against p-nitrophenyl(pNP)-beta-D-galactoside, but not significantly at all towards pNP-alpha-D-galactoside, pNP-beta-D-glucoside, pNP-beta-D-mannoside, pNP-beta-L-fucoside, pNP-beta-D-xyloside, pNP-beta-L-arabinoside, pNP-beta-D-galuronide, pNP-beta-D-glucuronide, pNP-beta-D-lactoside or pNP-beta-D-cellobioside. This is Beta-galactosidase from Arthrobacter sp.